The following is a 218-amino-acid chain: MSIGILGKKLGMSQFFDDQGRAIPVTLIEAGPCRITQLKTSEIDGYAAVQIGFGDTREKLINKPSKGHLTKSGEVLLKHLREYRVEGLEGLELGAAITVGSFEAGQKVDVSGDTMGRGFAGYQKRHGFSRGPMSHGSKNHREPGSTGAGTTPGRIYPGKRMAGRYGGKKRTTRGLTILKVDSNRNLLVVKGSVPGKPGALLNIRPAKRVGNKPAQGGK.

The segment at 126 to 170 is disordered; it reads HGFSRGPMSHGSKNHREPGSTGAGTTPGRIYPGKRMAGRYGGKKR.

The protein belongs to the universal ribosomal protein uL3 family. Part of the 50S ribosomal subunit. Forms a cluster with proteins L14 and L19.

In terms of biological role, one of the primary rRNA binding proteins, it binds directly near the 3'-end of the 23S rRNA, where it nucleates assembly of the 50S subunit. This chain is Large ribosomal subunit protein uL3, found in Prochlorococcus marinus (strain MIT 9313).